Reading from the N-terminus, the 266-residue chain is 3-methyl-2-oxobutanoate hydroxymethyltransferase (266 aa).

Residues aspartate 45 and aspartate 84 each coordinate Mg(2+). Residues 45-46, aspartate 84, and lysine 113 each bind 3-methyl-2-oxobutanoate; that span reads DS. Glutamate 115 contributes to the Mg(2+) binding site. The Proton acceptor role is filled by glutamate 183.

This sequence belongs to the PanB family. In terms of assembly, homodecamer; pentamer of dimers. Mg(2+) is required as a cofactor.

It localises to the cytoplasm. It carries out the reaction 3-methyl-2-oxobutanoate + (6R)-5,10-methylene-5,6,7,8-tetrahydrofolate + H2O = 2-dehydropantoate + (6S)-5,6,7,8-tetrahydrofolate. The protein operates within cofactor biosynthesis; (R)-pantothenate biosynthesis; (R)-pantoate from 3-methyl-2-oxobutanoate: step 1/2. Catalyzes the reversible reaction in which hydroxymethyl group from 5,10-methylenetetrahydrofolate is transferred onto alpha-ketoisovalerate to form ketopantoate. The polypeptide is 3-methyl-2-oxobutanoate hydroxymethyltransferase (Coxiella burnetii (strain Dugway 5J108-111)).